A 162-amino-acid chain; its full sequence is Disulfide bond formation protein B (162 aa).

Over 1 to 8 the chain is Cytoplasmic; sequence MTPLFRKA. A helical transmembrane segment spans residues 9 to 25; the sequence is VWLLFAVSVCAFAGSLA. Residues 26 to 43 are Periplasmic-facing; sequence AQYVLGMEPCVLCISQRL. Cys-35 and Cys-38 are joined by a disulfide. Residues 44–60 form a helical membrane-spanning segment; that stretch reads CVLATALCAAIVLMCRP. At 61-67 the chain is on the cytoplasmic side; the sequence is RRKAGGL. A helical membrane pass occupies residues 68–85; that stretch reads FGAVFISIPAVTGISVAA. The Periplasmic portion of the chain corresponds to 86–141; it reads YQLWLQSLPPGTAPSCGAPWTFRLKGWPLFDWFEPVVRGFGNCAEPDYLLGVALPV. Cys-101 and Cys-128 are disulfide-bonded. The helical transmembrane segment at 142–160 threads the bilayer; sequence WSVAYFLAVALTVWWAWAR. The Cytoplasmic portion of the chain corresponds to 161–162; that stretch reads AK.

It belongs to the DsbB family.

It is found in the cell inner membrane. In terms of biological role, required for disulfide bond formation in some periplasmic proteins. Acts by oxidizing the DsbA protein. This is Disulfide bond formation protein B from Neisseria meningitidis serogroup A / serotype 4A (strain DSM 15465 / Z2491).